The following is a 66-amino-acid chain: MKAIYILSVLLLMMLPILSRFATSEGAAQHVEPIQKIRVEQNDCTRGIRCPRGHYCDPGLRQCLPR.

Positions 1-19 are cleaved as a signal peptide; it reads MKAIYILSVLLLMMLPILS.

Belongs to the scoloptoxin-04 family. Post-translationally, contains 2 disulfide bonds. As to expression, expressed by the venom gland.

Its subcellular location is the secreted. This is U-scoloptoxin(04)-Ssd2a from Scolopendra dehaani (Thai centipede).